Here is a 278-residue protein sequence, read N- to C-terminus: MTVLHSVDFFPSGNASVAIEPRLPQADFPEHHHDFHEIVIVEHGTGIHVFNGQPYTITGGTVCFVRDHDRHLYEHTDNLCLTNVLYRSPDRFQFLAGLNQLLPQELDGQYPSHWRVNHSVLQQVRQLVAQMEQQEGENDLPSTASREILFMQLLLLLRKSSLQENLENSASRLNLLLAWLEDHFADEVNWDAVADQFSLSLRTLHRQLKQQTGLTPQRYLNRLRLMKARHLLRHSEASVTDIAYHCGFSDSNHFSTLFRREFNWSPRDIRQGRDGFLQ.

The HTH araC/xylS-type domain occupies 174–272 (NLLLAWLEDH…NWSPRDIRQG (99 aa)). DNA-binding regions (H-T-H motif) lie at residues 191-212 (DAVADQFSLSLRTLHRQLKQQT) and 239-262 (VTDIAYHCGFSDSNHFSTLFRREF).

Binds DNA as a dimer.

It is found in the cytoplasm. In terms of biological role, activates expression of the rhaBAD and rhaT operons. This chain is HTH-type transcriptional activator RhaS, found in Escherichia coli O157:H7.